Reading from the N-terminus, the 442-residue chain is Pentatricopeptide repeat-containing protein At2g27800, mitochondrial (442 aa).

The N-terminal 67 residues, Met1–Phe67, are a transit peptide targeting the mitochondrion. PPR repeat units follow at residues Asn206–Ser236, Thr244–Pro286, Asp287–Pro322, Asn323–Pro357, Asn358–Val392, and Asp393–Asp427.

The protein belongs to the PPR family. P subfamily.

The protein localises to the mitochondrion. In Arabidopsis thaliana (Mouse-ear cress), this protein is Pentatricopeptide repeat-containing protein At2g27800, mitochondrial.